The following is a 330-amino-acid chain: Ketol-acid reductoisomerase (NADP(+)) (330 aa).

A KARI N-terminal Rossmann domain is found at 2–182 (IHVYYDKDAN…GCTKAGVIET (181 aa)). NADP(+) contacts are provided by residues 25–28 (YGSQ), Arg-48, Ser-51, Ser-53, and 83–86 (DEVQ). Residue His-108 is part of the active site. Gly-134 is an NADP(+) binding site. The region spanning 183 to 328 (TFKEETETDL…KKLRDMMPWI (146 aa)) is the KARI C-terminal knotted domain. Positions 191, 195, 227, and 231 each coordinate Mg(2+). Ser-252 lines the substrate pocket.

Belongs to the ketol-acid reductoisomerase family. It depends on Mg(2+) as a cofactor.

It carries out the reaction (2R)-2,3-dihydroxy-3-methylbutanoate + NADP(+) = (2S)-2-acetolactate + NADPH + H(+). The enzyme catalyses (2R,3R)-2,3-dihydroxy-3-methylpentanoate + NADP(+) = (S)-2-ethyl-2-hydroxy-3-oxobutanoate + NADPH + H(+). The protein operates within amino-acid biosynthesis; L-isoleucine biosynthesis; L-isoleucine from 2-oxobutanoate: step 2/4. It functions in the pathway amino-acid biosynthesis; L-valine biosynthesis; L-valine from pyruvate: step 2/4. Its function is as follows. Involved in the biosynthesis of branched-chain amino acids (BCAA). Catalyzes an alkyl-migration followed by a ketol-acid reduction of (S)-2-acetolactate (S2AL) to yield (R)-2,3-dihydroxy-isovalerate. In the isomerase reaction, S2AL is rearranged via a Mg-dependent methyl migration to produce 3-hydroxy-3-methyl-2-ketobutyrate (HMKB). In the reductase reaction, this 2-ketoacid undergoes a metal-dependent reduction by NADPH to yield (R)-2,3-dihydroxy-isovalerate. This is Ketol-acid reductoisomerase (NADP(+)) from Halothermothrix orenii (strain H 168 / OCM 544 / DSM 9562).